We begin with the raw amino-acid sequence, 353 residues long: MSTAQKAKILQLIDSCCQNAKSTQLKSLSFVIGAVNGTTKEAKRTYIQEQCEFLEKLRQQKIREGRINILSMDAGVSNFAFSKMQLLNNDPLPKVLDWQKINLEEKFFQNLKKLSLNPAETSELVFNLTEYLFESMPIPDMFTIERQRTRTMSSRHILDPILKVNILEQILFSNLENKMKYTNKIPNTSKLRYMVCSSDPHRMTSYWCIPREETPTSSKKLKSNKHSKDSRIKLVKKILSTSILEGNSTSSTKLVEFIGVWNNRIRNALTKKKSFKLCDILEIQDNSGVRKDDDLADSFLHCLSWMEWLKNYESITELLNSKTLVKTQFGQVFEFCENKVQKLKFLQNTYNND.

Mg(2+) contacts are provided by Asp293 and Asp294.

As to quaternary structure, homodimer. Requires Mg(2+) as cofactor.

The protein localises to the mitochondrion. The catalysed reaction is Endonucleolytic cleavage at a junction such as a reciprocal single-stranded crossover between two homologous DNA duplexes (Holliday junction).. In terms of biological role, capable of resolving Holliday junctions. Specific for 4-way junctions. Seems to be important for the maintenance of mitochondrial DNA. Cleaves fixed junctions at the point of strand exchange. Cleaves after 5'-CT-3' sequence. This chain is Cruciform cutting endonuclease 1, mitochondrial (CCE1), found in Saccharomyces cerevisiae (strain ATCC 204508 / S288c) (Baker's yeast).